The sequence spans 115 residues: NAD(P)H-quinone oxidoreductase subunit M (115 aa).

It belongs to the complex I NdhM subunit family. In terms of assembly, NDH-1 can be composed of about 15 different subunits; different subcomplexes with different compositions have been identified which probably have different functions.

It is found in the cellular thylakoid membrane. The enzyme catalyses a plastoquinone + NADH + (n+1) H(+)(in) = a plastoquinol + NAD(+) + n H(+)(out). It catalyses the reaction a plastoquinone + NADPH + (n+1) H(+)(in) = a plastoquinol + NADP(+) + n H(+)(out). In terms of biological role, NDH-1 shuttles electrons from an unknown electron donor, via FMN and iron-sulfur (Fe-S) centers, to quinones in the respiratory and/or the photosynthetic chain. The immediate electron acceptor for the enzyme in this species is believed to be plastoquinone. Couples the redox reaction to proton translocation, and thus conserves the redox energy in a proton gradient. Cyanobacterial NDH-1 also plays a role in inorganic carbon-concentration. This Prochlorococcus marinus (strain NATL1A) protein is NAD(P)H-quinone oxidoreductase subunit M.